The primary structure comprises 332 residues: Mediator of RNA polymerase II transcription subunit 3 (332 aa).

2 disordered regions span residues 125–206 (EPVR…PGAT) and 221–242 (SPLN…TTPS). Residues 132-143 (SPSYRRPSNRSS) show a composition bias toward low complexity. Polar residues predominate over residues 144–153 (ADTPSSNAPT). 2 stretches are compositionally biased toward low complexity: residues 155–166 (SAAVVSGAALVA) and 184–200 (PSVS…SGPA).

It belongs to the Mediator complex subunit 3 family. As to quaternary structure, component of the Mediator complex.

It localises to the nucleus. Its function is as follows. Component of the Mediator complex, a coactivator involved in regulated gene transcription of nearly all RNA polymerase II-dependent genes. Mediator functions as a bridge to convey information from gene-specific regulatory proteins to the basal RNA polymerase II transcription machinery. Mediator is recruited to promoters by direct interactions with regulatory proteins and serves as a scaffold for the assembly of a functional preinitiation complex with RNA polymerase II and the general transcription factors. The sequence is that of Mediator of RNA polymerase II transcription subunit 3 (PGD1) from Eremothecium gossypii (strain ATCC 10895 / CBS 109.51 / FGSC 9923 / NRRL Y-1056) (Yeast).